Reading from the N-terminus, the 430-residue chain is Rosmarinate synthase (430 aa).

The active-site Proton acceptor is the His152. The tract at residues 178 to 210 is disordered; it reads TPLPHFDRSSLSARNPPQPQFSHAEYQPPPTLE. Asp377 functions as the Proton acceptor in the catalytic mechanism.

The protein belongs to the plant acyltransferase family.

It catalyses the reaction (2R)-3-(3,4-dihydroxyphenyl)lactate + (E)-caffeoyl-CoA = (R)-rosmarinate + CoA. In terms of biological role, involved in the biosynthesis of rosmarinic acid, a compound with antiviral, antimicrobial and anti-inflammatory activities. Can use 4-coumaroyl- and caffeoyl-CoA as hydroxycinnamoyl donors and 4-Hydroxyphenyllactate and 3.4-Dihydroxyphenyllactate, but not shikimate or quinate, as hydroxycinnamoyl acceptors. Can also putatively catalyze amide formation with D-amino acids as acceptors. This chain is Rosmarinate synthase (RAS), found in Plectranthus scutellarioides (Coleus).